A 350-amino-acid polypeptide reads, in one-letter code: GTPase Obg (350 aa).

The region spanning 1–159 is the Obg domain; it reads MKFLDQAKIY…RWIWLRLKLI (159 aa). The 169-residue stretch at 160–328 folds into the OBG-type G domain; it reads ADVGLVGLPN…VLRLLQDRVT (169 aa). GTP is bound by residues 166-173, 191-195, 213-216, 280-283, and 309-311; these read GLPNAGKS, FTTLH, DIPG, NKID, and SGV. The Mg(2+) site is built by Ser173 and Thr193. The interval 331 to 350 is disordered; that stretch reads REAARDAAPPQAAAGREETA.

This sequence belongs to the TRAFAC class OBG-HflX-like GTPase superfamily. OBG GTPase family. Monomer. It depends on Mg(2+) as a cofactor.

It is found in the cytoplasm. Functionally, an essential GTPase which binds GTP, GDP and possibly (p)ppGpp with moderate affinity, with high nucleotide exchange rates and a fairly low GTP hydrolysis rate. Plays a role in control of the cell cycle, stress response, ribosome biogenesis and in those bacteria that undergo differentiation, in morphogenesis control. This Gluconacetobacter diazotrophicus (strain ATCC 49037 / DSM 5601 / CCUG 37298 / CIP 103539 / LMG 7603 / PAl5) protein is GTPase Obg.